Reading from the N-terminus, the 85-residue chain is Small ribosomal subunit protein bS16 (85 aa).

The protein belongs to the bacterial ribosomal protein bS16 family.

The polypeptide is Small ribosomal subunit protein bS16 (Xanthomonas euvesicatoria pv. vesicatoria (strain 85-10) (Xanthomonas campestris pv. vesicatoria)).